Here is a 1839-residue protein sequence, read N- to C-terminus: Adenylate cyclase (1839 aa).

Disordered regions lie at residues 1–21 (MSSP…PQIE), 43–87 (ITTH…PRFS), 126–245 (TSLL…PIVS), 272–315 (KNTE…QWTA), 332–388 (KRKA…DSND), and 400–468 (ESSG…SFSK). Residues 165–211 (SQSNESRGTRSSIFFPSTSNSRRGSATSTMTSGSRSSHPPDTPPITS) are compositionally biased toward polar residues. A compositionally biased stretch (low complexity) spans 212–221 (QQQEQQYDQQ). The span at 222–233 (RQQRPETREQEQ) shows a compositional bias: basic and acidic residues. Residues 332–355 (KRKAKHHHHYHHPQHPRPPHRKHY) show a composition bias toward basic residues. The segment covering 361–376 (PIEDKAVVEKEQEPPE) has biased composition (basic and acidic residues). Residues 407-428 (SASTQSVSSFSSGATGASGATG) are compositionally biased toward low complexity. The region spanning 494-574 (RRYAIRIFNI…LNGYLKSDPL (81 aa)) is the Ras-associating domain. 22 LRR repeats span residues 632–655 (TSDI…FIES), 659–679 (LSSL…VTDA), 681–702 (KLVS…IFKL), 704–726 (NLTI…SKLK), 727–748 (NLQL…INSC), 750–771 (NLLQ…INQL), 773–794 (KLAK…SQMK), 795–816 (NLRT…APNL), 817–834 (QNLF…DDLT), 835–856 (RLRT…GNYM), 858–879 (NMTS…LLSK), 882–903 (RLEK…INKL), 905–926 (RLIY…ISDL), 928–950 (SLKS…EDLE), 951–971 (LTSL…PAKF), 982–1004 (SLLF…VNTF), 1006–1027 (NLKT…KLQN), 1028–1048 (LTEL…AVQH), 1051–1073 (SLKV…SQLS), 1074–1096 (RLSV…HYDW), 1103–1124 (DLKY…LDPE), and 1135–1160 (LKQL…SVSI). Residues 1173 to 1439 (RYGVADTLGQ…DNITILCVSL (267 aa)) form the PPM-type phosphatase domain. The Guanylate cyclase domain maps to 1483-1620 (AIVFTDIKNS…PVVNKAARVS (138 aa)). The Mg(2+) site is built by Asp1488 and Asp1531.

Belongs to the adenylyl cyclase class-3 family. The cofactor is Mg(2+).

It carries out the reaction ATP = 3',5'-cyclic AMP + diphosphate. Plays essential roles in regulation of cellular metabolism by catalyzing the synthesis of a second messenger, cAMP. The chain is Adenylate cyclase (CYR1) from Lachancea kluyveri (Yeast).